The chain runs to 685 residues: MTRKILVTSALPYANGSIHLGHMVEHIQTDVWVRFQKLRGNECHYCCADDTHGTPVMLAAQKQGIAPEDMIAKVREEHLADFTGFFIGYDNYYSTHSPENKQFSQDIYRALKANGKIESRVIEQLFDPEKQMFLPDRFVKGECPKCHAQDQYGDNCEVCGTTYSPTELINPYSAVSGAKPELRESEHFFFKLGECADFLKAWTSGNNPHDGKPHLQAEALNKMKEWLGEGEETTLSDWDISRDAPYFGFEIPDAPGKYFYVWLDAPVGYMASFKNLCDRIGVDFDEYFKAGSQTEMYHFIGKDILYFHALFWPAMLHFSGHRAPTGVYAHGFLTVDGQKMSKSRGTFITAKSYLEQGLNPEWMRYYIAAKLNSKIEDIDLNLQDFISRVNSDLVGKYVNIAARASGFIAKRFEGRLKDVADSALLAKLAAESDTIAEQYENREYARALRDIMALADAVNEYVDANKPWELAKQEGQDERLHEVCSELINAFTMLTAYLAPVLPQTAANAAKFLNLEAITWANTRETLGKHAINKYKHLMQRVEQKQVDDLIEANKQSIAAAAAPAAEESKYEKVAEQASFDDFMKIDMRVAKVLNCEAVEGSTKLLKFDLDFGFEQRIIFSGIAASYLNPAELNGRMVIAVANFAPRKMAKFGVSEGMILSAATADGKLKLLDVDAGAQPGDKVG.

The 'HIGH' region motif lies at 12 to 22 (PYANGSIHLGH). The Zn(2+) site is built by Cys-143, Cys-146, Cys-156, and Cys-159. The 'KMSKS' region signature appears at 339–343 (KMSKS). Lys-342 contributes to the ATP binding site. The tRNA-binding domain maps to 582–685 (DFMKIDMRVA…AGAQPGDKVG (104 aa)).

This sequence belongs to the class-I aminoacyl-tRNA synthetase family. MetG type 1 subfamily. In terms of assembly, homodimer. Zn(2+) serves as cofactor.

The protein resides in the cytoplasm. It carries out the reaction tRNA(Met) + L-methionine + ATP = L-methionyl-tRNA(Met) + AMP + diphosphate. Is required not only for elongation of protein synthesis but also for the initiation of all mRNA translation through initiator tRNA(fMet) aminoacylation. In Neisseria meningitidis serogroup C (strain 053442), this protein is Methionine--tRNA ligase.